The chain runs to 457 residues: Dihydrolipoyl dehydrogenase (457 aa).

FAD-binding positions include 32 to 40 (EKQYFGGVC), K49, and A113. C40 and C45 are joined by a disulfide. NAD(+)-binding positions include 178 to 182 (GGGVI), V235, and 262 to 265 (SIGR). 2 residues coordinate FAD: D303 and A311. Catalysis depends on H437, which acts as the Proton acceptor.

Belongs to the class-I pyridine nucleotide-disulfide oxidoreductase family. Homodimer. FAD is required as a cofactor.

It is found in the cytoplasm. It catalyses the reaction N(6)-[(R)-dihydrolipoyl]-L-lysyl-[protein] + NAD(+) = N(6)-[(R)-lipoyl]-L-lysyl-[protein] + NADH + H(+). Its function is as follows. Lipoamide dehydrogenase is a component of the alpha-ketoacid dehydrogenase complexes. In Mycoplasma genitalium (strain ATCC 33530 / DSM 19775 / NCTC 10195 / G37) (Mycoplasmoides genitalium), this protein is Dihydrolipoyl dehydrogenase (pdhD).